A 312-amino-acid chain; its full sequence is uncharacterized protein (312 aa).

Residues 1–19 (MFSKYLVTASSLFVALTSA) form the signal peptide.

This is an uncharacterized protein from Saccharomyces cerevisiae (strain ATCC 204508 / S288c) (Baker's yeast).